Consider the following 436-residue polypeptide: Succinyl-CoA:glutarate CoA-transferase (436 aa).

The N-terminal 8 residues, 1-8, are a transit peptide targeting the mitochondrion; sequence MLWMLARA. The active-site Nucleophile is aspartate 203. 2 positions are modified to N6-acetyllysine: lysine 392 and lysine 423.

Belongs to the CoA-transferase III family.

Its subcellular location is the mitochondrion. It carries out the reaction glutarate + succinyl-CoA = glutaryl-CoA + succinate. The catalysed reaction is 3-hydroxy-3-methylglutarate + succinyl-CoA = (3S)-3-hydroxy-3-methylglutaryl-CoA + succinate. The enzyme catalyses 3-hydroxy-3-methylglutarate + glutaryl-CoA = (3S)-3-hydroxy-3-methylglutaryl-CoA + glutarate. It catalyses the reaction hexanedioate + glutaryl-CoA = hexanedioyl-CoA + glutarate. It carries out the reaction itaconate + glutaryl-CoA = itaconyl-CoA + glutarate. The catalysed reaction is itaconate + succinyl-CoA = itaconyl-CoA + succinate. Functionally, coenzyme A (CoA) transferase that reversibly catalyzes the transfer of a CoA moiety from a dicarboxyl-CoA to a dicarboxylate in a metabolite recycling process. Displays preference for succinyl-CoA and glutarate-CoA as dicarboxyl-CoA donors and glutarate, succinate, adipate/hexanedioate, itaconate and 3-hydroxy-3-methylglutarate as dicarboxylate acceptors. Acts on intermediates or end products of lysine and tryptophan degradation pathway, in particular catalyzes succinyl-CoA-dependent reesterification of free glutarate into glutaryl-CoA to prevent renal excretion of glutarate. Upon inflammation, may convert macrophage-derived itaconate to itaconyl-CoA in erythroid precursors where it negatively regulates the TCA cycle and heme synthesis to limit erythroid differentiation in the context of stress erythropoiesis. The sequence is that of Succinyl-CoA:glutarate CoA-transferase from Mus musculus (Mouse).